Reading from the N-terminus, the 142-residue chain is uncharacterized protein (142 aa).

The next 2 membrane-spanning stretches (helical) occupy residues 75–97 (VFFR…YIVA) and 107–124 (LSIV…KLFY).

Its subcellular location is the cell membrane. This is an uncharacterized protein from Archaeoglobus fulgidus (strain ATCC 49558 / DSM 4304 / JCM 9628 / NBRC 100126 / VC-16).